Reading from the N-terminus, the 329-residue chain is G-protein coupled receptor 3 (329 aa).

Residues 1–43 lie on the Extracellular side of the membrane; it reads MMWGAGRSMAWFSAGSGSVNVSIDPAEEPTGPATLLPSPRAWD. Asparagine 20 carries an N-linked (GlcNAc...) asparagine glycan. A helical transmembrane segment spans residues 44 to 64; that stretch reads VVLCISGTLVSCENALVVAII. The Cytoplasmic portion of the chain corresponds to 65 to 73; it reads VGTPAFRAP. A helical transmembrane segment spans residues 74 to 94; the sequence is MFLLVGSLAVADLLAGLGLVL. Over 95–108 the chain is Extracellular; the sequence is HFAADFCIGSPEMS. A helical membrane pass occupies residues 109 to 129; it reads LVLVGVLATAFTASIGSLLAI. The Cytoplasmic segment spans residues 130–153; the sequence is TVDRYLSLYNALTYYSETTVTRTY. Residues 154–174 traverse the membrane as a helical segment; it reads VMLALVWVGALGLGLVPVLAW. At 175 to 192 the chain is on the extracellular side; it reads NCRDGLTTCGVVYPLSKN. Residues 193-213 traverse the membrane as a helical segment; it reads HLVVLAIVFFMVFGIMLQLYA. At 214–247 the chain is on the cytoplasmic side; that stretch reads QICRIVCRHAQQIALQRHLLPASHYVATRKGIAT. The helical transmembrane segment at 248-268 threads the bilayer; sequence LAVVLGAFAACWLPFTVYCLL. Residues 269 to 277 are Extracellular-facing; it reads GDANSPPLY. Residues 278–298 form a helical membrane-spanning segment; the sequence is TYLTLLPATYNSMINPVIYAF. The Cytoplasmic segment spans residues 299–329; it reads RNQDVQKVLWAICCCCSTSKIPFRSRSPSDV. Cysteine 312 carries the S-palmitoyl cysteine lipid modification. Residues serine 323, serine 325, and serine 327 each carry the phosphoserine modification.

The protein belongs to the G-protein coupled receptor 1 family. Abundantly expressed in granule neurons at all development stages. Enriched in the longest tips of neurites during differentiation of hippocampal neurons.

It is found in the cell membrane. Functionally, constitutively active G-protein coupled receptor that maintains high 3'-5'-cyclic adenosine monophosphate (cAMP) levels that a plays a role in serveral processes including meiotic arrest in oocytes or neuronal development via activation of numerous intracellular signaling pathways. Acts as an essential activator of thermogenic adipocytes and drives thermogenesis via its intrinsic G(s)-coupling activity without the requirement of a ligand. Has a potential role in modulating a number of brain functions, including behavioral responses to stress, amyloid-beta peptide generation in neurons. Stimulates neurite outgrowth in cerebellar granular neurons modulated via PKA, ERK, and most strongly PI3K-mediated signaling pathways. The polypeptide is G-protein coupled receptor 3 (Gpr3) (Rattus norvegicus (Rat)).